Reading from the N-terminus, the 269-residue chain is 3-deoxy-manno-octulosonate cytidylyltransferase (269 aa).

It belongs to the KdsB family.

The protein resides in the cytoplasm. It catalyses the reaction 3-deoxy-alpha-D-manno-oct-2-ulosonate + CTP = CMP-3-deoxy-beta-D-manno-octulosonate + diphosphate. It participates in nucleotide-sugar biosynthesis; CMP-3-deoxy-D-manno-octulosonate biosynthesis; CMP-3-deoxy-D-manno-octulosonate from 3-deoxy-D-manno-octulosonate and CTP: step 1/1. The protein operates within bacterial outer membrane biogenesis; lipopolysaccharide biosynthesis. In terms of biological role, activates KDO (a required 8-carbon sugar) for incorporation into bacterial lipopolysaccharide in Gram-negative bacteria. This is 3-deoxy-manno-octulosonate cytidylyltransferase from Cupriavidus pinatubonensis (strain JMP 134 / LMG 1197) (Cupriavidus necator (strain JMP 134)).